The chain runs to 265 residues: Synaptoporin (265 aa).

Topologically, residues 1–4 (MCMV) are cytoplasmic. An MARVEL domain is found at 1–202 (MCMVIFAPLF…NIWFVFKETG (202 aa)). Residues 5-25 (IFAPLFAIFAFATCGGYSGGL) form a helical membrane-spanning segment. Topologically, residues 26–81 (RLSVDCVNKTESNLSIDIAFAYPFRLHQVTFEVPTCEGKERQKLALIGDSSSSAEF) are vesicular. Asparagine 33 and asparagine 38 each carry an N-linked (GlcNAc...) asparagine glycan. Residues 82–102 (FVTVAVFAFLYSLAATVVYIF) form a helical membrane-spanning segment. The Cytoplasmic segment spans residues 103 to 114 (FQNKYRENNRGP). The chain crosses the membrane as a helical span at residues 115–135 (LIDFIVTVVFSFLWLVGSSAW). Residues 136–177 (AKGLSDVKVATDPKEVLLLMSACKQPSNKCMAIHSPVMSSLN) lie on the Vesicular side of the membrane. Residues 178–198 (TSVVFGFLNFILWAGNIWFVF) traverse the membrane as a helical segment. Residues 199-265 (KETGWHSSGQ…TGPTSFTNQI (67 aa)) lie on the Cytoplasmic side of the membrane. 5 consecutive repeat copies span residues 210–214 (YLSDP), 222–226 (YNQGG), 227–231 (YNQDS), 232–236 (YGSSS), and 238–242 (YSQQA). The tract at residues 210 to 242 (YLSDPMEKHSSSYNQGGYNQDSYGSSSGYSQQA) is 5 X approximate repeats. Serine 212 bears the Phosphoserine mark. The disordered stretch occupies residues 221–265 (SYNQGGYNQDSYGSSSGYSQQASLGPTSDEFGQQPTGPTSFTNQI). Over residues 224–243 (QGGYNQDSYGSSSGYSQQAS) the composition is skewed to low complexity. Residues 244-265 (LGPTSDEFGQQPTGPTSFTNQI) show a composition bias toward polar residues.

This sequence belongs to the synaptophysin/synaptobrevin family.

The protein resides in the cytoplasmic vesicle. It localises to the secretory vesicle. Its subcellular location is the synaptic vesicle membrane. It is found in the synapse. The protein localises to the synaptosome. In terms of biological role, intrinsic membrane protein of small synaptic vesicles. Probable vesicular channel protein. The protein is Synaptoporin (SYNPR) of Homo sapiens (Human).